The primary structure comprises 89 residues: MYLNPEKKKEFFAKYGKSNTDSGSPEGQIALFSYRISHLTEHLKVNRKDYNTERSLKMLVGKRRRLLDYLKRCDIGRYRFIINELGIRR.

It belongs to the universal ribosomal protein uS15 family. Part of the 30S ribosomal subunit. Forms a bridge to the 50S subunit in the 70S ribosome, contacting the 23S rRNA.

Its function is as follows. One of the primary rRNA binding proteins, it binds directly to 16S rRNA where it helps nucleate assembly of the platform of the 30S subunit by binding and bridging several RNA helices of the 16S rRNA. Forms an intersubunit bridge (bridge B4) with the 23S rRNA of the 50S subunit in the ribosome. This chain is Small ribosomal subunit protein uS15, found in Azobacteroides pseudotrichonymphae genomovar. CFP2.